The following is a 131-amino-acid chain: Phosphoribosyl-AMP cyclohydrolase (131 aa).

Aspartate 78 is a Mg(2+) binding site. Cysteine 79 contributes to the Zn(2+) binding site. Aspartate 80 and aspartate 82 together coordinate Mg(2+). Residues cysteine 96 and cysteine 103 each coordinate Zn(2+).

The protein belongs to the PRA-CH family. As to quaternary structure, homodimer. It depends on Mg(2+) as a cofactor. The cofactor is Zn(2+).

It is found in the cytoplasm. The enzyme catalyses 1-(5-phospho-beta-D-ribosyl)-5'-AMP + H2O = 1-(5-phospho-beta-D-ribosyl)-5-[(5-phospho-beta-D-ribosylamino)methylideneamino]imidazole-4-carboxamide. The protein operates within amino-acid biosynthesis; L-histidine biosynthesis; L-histidine from 5-phospho-alpha-D-ribose 1-diphosphate: step 3/9. Functionally, catalyzes the hydrolysis of the adenine ring of phosphoribosyl-AMP. The sequence is that of Phosphoribosyl-AMP cyclohydrolase from Neisseria gonorrhoeae (strain ATCC 700825 / FA 1090).